Here is a 260-residue protein sequence, read N- to C-terminus: Proteasome subunit alpha 1 (260 aa).

Residues 237-260 form a disordered region; sequence AEADLLDTGEDADDEAEDEDATEE. Positions 240 to 260 are enriched in acidic residues; it reads DLLDTGEDADDEAEDEDATEE.

Belongs to the peptidase T1A family. In terms of assembly, the 20S proteasome core is composed of 14 alpha and 14 beta subunits that assemble into four stacked heptameric rings, resulting in a barrel-shaped structure. The two inner rings, each composed of seven catalytic beta subunits, are sandwiched by two outer rings, each composed of seven alpha subunits. The catalytic chamber with the active sites is on the inside of the barrel. Has a gated structure, the ends of the cylinder being occluded by the N-termini of the alpha-subunits. Is capped at one or both ends by the proteasome regulatory ATPase, PAN.

Its subcellular location is the cytoplasm. Its activity is regulated as follows. The formation of the proteasomal ATPase PAN-20S proteasome complex, via the docking of the C-termini of PAN into the intersubunit pockets in the alpha-rings, triggers opening of the gate for substrate entry. Interconversion between the open-gate and close-gate conformations leads to a dynamic regulation of the 20S proteasome proteolysis activity. Its function is as follows. Component of the proteasome core, a large protease complex with broad specificity involved in protein degradation. This Haloarcula marismortui (strain ATCC 43049 / DSM 3752 / JCM 8966 / VKM B-1809) (Halobacterium marismortui) protein is Proteasome subunit alpha 1.